The following is a 182-amino-acid chain: ATP-dependent protease subunit HslV (182 aa).

T7 is a catalytic residue. Na(+) is bound by residues A166, C169, and T172.

It belongs to the peptidase T1B family. HslV subfamily. A double ring-shaped homohexamer of HslV is capped on each side by a ring-shaped HslU homohexamer. The assembly of the HslU/HslV complex is dependent on binding of ATP.

Its subcellular location is the cytoplasm. The enzyme catalyses ATP-dependent cleavage of peptide bonds with broad specificity.. Its activity is regulated as follows. Allosterically activated by HslU binding. Functionally, protease subunit of a proteasome-like degradation complex believed to be a general protein degrading machinery. In Albidiferax ferrireducens (strain ATCC BAA-621 / DSM 15236 / T118) (Rhodoferax ferrireducens), this protein is ATP-dependent protease subunit HslV.